A 135-amino-acid chain; its full sequence is Galectin-1 (135 aa).

Residue Ala2 is modified to N-acetylalanine. A Galectin domain is found at 4 to 135; it reads GLVASNLNLK…DFKIKCVAFE (132 aa). 2 positions are modified to N6-acetyllysine: Lys13 and Lys29. Ser30 carries the post-translational modification Phosphoserine. A beta-D-galactoside-binding positions include 45 to 49, His53, Asn62, and 69 to 72; these read HFNPR and WGAE. Lys108 is subject to N6-acetyllysine; alternate. An N6-succinyllysine; alternate modification is found at Lys108. Lys128 is modified (N6-acetyllysine).

In terms of assembly, homodimer. Binds LGALS3BP. Interacts with CD2, CD3, CD4, CD6, CD7, CD43, ALCAM and CD45. Interacts with laminin (via poly-N-acetyllactosamine). Interacts with SUSD2. Interacts with cargo receptor TMED10; the interaction mediates the translocation from the cytoplasm into the ERGIC (endoplasmic reticulum-Golgi intermediate compartment) and thereby secretion.

Its subcellular location is the secreted. The protein resides in the extracellular space. It localises to the extracellular matrix. It is found in the cytoplasm. Its function is as follows. Lectin that binds beta-galactoside and a wide array of complex carbohydrates. Plays a role in regulating apoptosis, cell proliferation and cell differentiation. Inhibits CD45 protein phosphatase activity and therefore the dephosphorylation of Lyn kinase. Strong inducer of T-cell apoptosis. Has hemagglutinating activity towards human erythrocytes. The chain is Galectin-1 from Capra hircus (Goat).